The following is a 146-amino-acid chain: 3-dehydroquinate dehydratase (146 aa).

The active-site Proton acceptor is the Y23. Substrate contacts are provided by N74, H80, and D87. H100 (proton donor) is an active-site residue. Substrate contacts are provided by residues 101–102 (IS) and R111.

The protein belongs to the type-II 3-dehydroquinase family. Homododecamer.

The enzyme catalyses 3-dehydroquinate = 3-dehydroshikimate + H2O. It participates in metabolic intermediate biosynthesis; chorismate biosynthesis; chorismate from D-erythrose 4-phosphate and phosphoenolpyruvate: step 3/7. Catalyzes a trans-dehydration via an enolate intermediate. The polypeptide is 3-dehydroquinate dehydratase (Bacillus cytotoxicus (strain DSM 22905 / CIP 110041 / 391-98 / NVH 391-98)).